The following is a 130-amino-acid chain: Small ribosomal subunit protein uS9 (130 aa).

It belongs to the universal ribosomal protein uS9 family.

This Aeromonas hydrophila subsp. hydrophila (strain ATCC 7966 / DSM 30187 / BCRC 13018 / CCUG 14551 / JCM 1027 / KCTC 2358 / NCIMB 9240 / NCTC 8049) protein is Small ribosomal subunit protein uS9.